Reading from the N-terminus, the 545-residue chain is CTP synthase (545 aa).

The amidoligase domain stretch occupies residues 1-266; the sequence is MTTRYIFVTG…DDLVVKRFGL (266 aa). Ser-14 is a CTP binding site. Position 14 (Ser-14) interacts with UTP. Residues 15–20 and Asp-72 contribute to the ATP site; that span reads SLGKGI. The Mg(2+) site is built by Asp-72 and Glu-140. Residues 147-149, 187-192, and Lys-223 each bind CTP; these read DIE and KTKPTQ. UTP contacts are provided by residues 187–192 and Lys-223; that span reads KTKPTQ. 239–241 contributes to the ATP binding site; it reads KDV. In terms of domain architecture, Glutamine amidotransferase type-1 spans 291–542; it reads VIGMVGKYIE…IAAASAHQKR (252 aa). An L-glutamine-binding site is contributed by Gly-352. The Nucleophile; for glutamine hydrolysis role is filled by Cys-379. Residues 380-383, Glu-403, and Arg-470 contribute to the L-glutamine site; that span reads LGMQ. Active-site residues include His-515 and Glu-517.

It belongs to the CTP synthase family. As to quaternary structure, homotetramer.

The enzyme catalyses UTP + L-glutamine + ATP + H2O = CTP + L-glutamate + ADP + phosphate + 2 H(+). It carries out the reaction L-glutamine + H2O = L-glutamate + NH4(+). It catalyses the reaction UTP + NH4(+) + ATP = CTP + ADP + phosphate + 2 H(+). It participates in pyrimidine metabolism; CTP biosynthesis via de novo pathway; CTP from UDP: step 2/2. Its activity is regulated as follows. Allosterically activated by GTP, when glutamine is the substrate; GTP has no effect on the reaction when ammonia is the substrate. The allosteric effector GTP functions by stabilizing the protein conformation that binds the tetrahedral intermediate(s) formed during glutamine hydrolysis. Inhibited by the product CTP, via allosteric rather than competitive inhibition. Functionally, catalyzes the ATP-dependent amination of UTP to CTP with either L-glutamine or ammonia as the source of nitrogen. Regulates intracellular CTP levels through interactions with the four ribonucleotide triphosphates. The polypeptide is CTP synthase (Shewanella putrefaciens (strain CN-32 / ATCC BAA-453)).